The chain runs to 313 residues: Serine/threonine-protein phosphatase PP2A-3 catalytic subunit (313 aa).

Mn(2+) is bound by residues aspartate 61, histidine 63, aspartate 89, and asparagine 121. The active-site Proton donor is the histidine 122. Mn(2+) is bound by residues histidine 171 and histidine 245. Residue leucine 313 is modified to Leucine methyl ester.

Belongs to the PPP phosphatase family. PP-2A subfamily. As to quaternary structure, PP2A consists of a common heterodimeric core enzyme, composed of a 36 kDa catalytic subunit (subunit C) and a 65 kDa constant regulatory subunit (subunit A), that associates with a variety of regulatory subunits such as subunits B (the R2/B/PR55/B55, R3/B''/PR72/PR130/PR59 and R5/B'/B56 families). Interacts with ACR4. Interacts with TAP46. Interacts with SIC/RON3. Mn(2+) serves as cofactor. In terms of processing, reversibly methyl esterified on Leu-313 by leucine carboxyl methyltransferase 1 (LCMT1) and pectin methylesterase 1 (PME1). Carboxyl methylation influences the affinity of the catalytic subunit for the different regulatory subunits, thereby modulating the PP2A holoenzyme's substrate specificity, enzyme activity and cellular localization. Post-translationally, phosphorylation of either threonine (by autophosphorylation-activated protein kinase) or tyrosine results in inactivation of the phosphatase. Auto-dephosphorylation has been suggested as a mechanism for reactivation.

It is found in the cytoplasm. The catalysed reaction is O-phospho-L-seryl-[protein] + H2O = L-seryl-[protein] + phosphate. The enzyme catalyses O-phospho-L-threonyl-[protein] + H2O = L-threonyl-[protein] + phosphate. In terms of biological role, functions redundantly with PP2A4, and is involved in establishing auxin gradients, apical-basal axis of polarity and root and shoot apical meristem during embryogenesis. May dephosphorylate PIN1 and regulate its subcellular distribution for polar auxin transport. Involved in the regulation of formative cell division in roots by dephosphorylating ACR4 protein kinase. In Arabidopsis thaliana (Mouse-ear cress), this protein is Serine/threonine-protein phosphatase PP2A-3 catalytic subunit.